Reading from the N-terminus, the 91-residue chain is Small ribosomal subunit protein bS6 (91 aa).

Belongs to the bacterial ribosomal protein bS6 family.

In terms of biological role, binds together with bS18 to 16S ribosomal RNA. The chain is Small ribosomal subunit protein bS6 from Leptospira biflexa serovar Patoc (strain Patoc 1 / Ames).